Reading from the N-terminus, the 641-residue chain is DNA mismatch repair protein MutL (641 aa).

Positions 345-445 are disordered; the sequence is PAAVAPPAPA…GDTSLGDTSP (101 aa). Positions 419 to 429 are enriched in basic and acidic residues; the sequence is PRTEPATRTGE. The span at 432–442 shows a compositional bias: polar residues; sequence GISSGDTSLGD.

It belongs to the DNA mismatch repair MutL/HexB family.

This protein is involved in the repair of mismatches in DNA. It is required for dam-dependent methyl-directed DNA mismatch repair. May act as a 'molecular matchmaker', a protein that promotes the formation of a stable complex between two or more DNA-binding proteins in an ATP-dependent manner without itself being part of a final effector complex. This is DNA mismatch repair protein MutL from Azotobacter vinelandii (strain DJ / ATCC BAA-1303).